Reading from the N-terminus, the 80-residue chain is Putative membrane protein insertion efficiency factor (80 aa).

This sequence belongs to the UPF0161 family.

The protein localises to the cell inner membrane. In terms of biological role, could be involved in insertion of integral membrane proteins into the membrane. The polypeptide is Putative membrane protein insertion efficiency factor (Syntrophobacter fumaroxidans (strain DSM 10017 / MPOB)).